The sequence spans 245 residues: Phycocyanobilin:ferredoxin oxidoreductase (245 aa).

It belongs to the HY2 family.

The enzyme catalyses (2R,3Z)-phycocyanobilin + 4 oxidized [2Fe-2S]-[ferredoxin] = biliverdin IXalpha + 4 reduced [2Fe-2S]-[ferredoxin] + 4 H(+). In terms of biological role, catalyzes the four-electron reduction of biliverdin IX-alpha (2-electron reduction at both the A and D rings); the reaction proceeds via an isolatable 2-electron intermediate, 181,182-dihydrobiliverdin. The protein is Phycocyanobilin:ferredoxin oxidoreductase of Trichormus variabilis (strain ATCC 29413 / PCC 7937) (Anabaena variabilis).